The chain runs to 366 residues: Carbamoyl phosphate synthase small chain (366 aa).

The segment at 1–168 is CPSase; it reads MYGILVLEDG…KETVVYSADD (168 aa). L-glutamine-binding residues include serine 45, glycine 220, and glycine 222. One can recognise a Glutamine amidotransferase type-1 domain in the interval 172–363; sequence KCVLIDCGVK…VELGIKFKAE (192 aa). Cysteine 247 (nucleophile) is an active-site residue. The L-glutamine site is built by leucine 248, glutamine 251, asparagine 289, glycine 291, and phenylalanine 292. Active-site residues include histidine 336 and glutamate 338.

Belongs to the CarA family. In terms of assembly, composed of two chains; the small (or glutamine) chain promotes the hydrolysis of glutamine to ammonia, which is used by the large (or ammonia) chain to synthesize carbamoyl phosphate. Tetramer of heterodimers (alpha,beta)4.

The enzyme catalyses hydrogencarbonate + L-glutamine + 2 ATP + H2O = carbamoyl phosphate + L-glutamate + 2 ADP + phosphate + 2 H(+). It carries out the reaction L-glutamine + H2O = L-glutamate + NH4(+). It functions in the pathway amino-acid biosynthesis; L-arginine biosynthesis; carbamoyl phosphate from bicarbonate: step 1/1. The protein operates within pyrimidine metabolism; UMP biosynthesis via de novo pathway; (S)-dihydroorotate from bicarbonate: step 1/3. Small subunit of the glutamine-dependent carbamoyl phosphate synthetase (CPSase). CPSase catalyzes the formation of carbamoyl phosphate from the ammonia moiety of glutamine, carbonate, and phosphate donated by ATP, constituting the first step of 2 biosynthetic pathways, one leading to arginine and/or urea and the other to pyrimidine nucleotides. The small subunit (glutamine amidotransferase) binds and cleaves glutamine to supply the large subunit with the substrate ammonia. This Methanococcus maripaludis (strain C6 / ATCC BAA-1332) protein is Carbamoyl phosphate synthase small chain.